The primary structure comprises 552 residues: HTH-type transcriptional regulator SgrR (552 aa).

Positions 1-116 constitute an HTH marR-type domain; that stretch reads MPSARLQQQF…LVSHLGRSFR (116 aa). The H-T-H motif DNA-binding region spans 26 to 49; it reads LNELAALLSCSRRHMRTLLNTMQD. Positions 163-492 are solute-binding; sequence ELEADIAHHW…IDWQVDAARW (330 aa).

In terms of biological role, activates the small RNA gene sgrS under glucose-phosphate stress conditions as well as yfdZ. Represses its own transcription under both stress and non-stress conditions. Might act as a sensor of the intracellular accumulation of phosphoglucose by binding these molecules in its C-terminal solute-binding domain. The polypeptide is HTH-type transcriptional regulator SgrR (Escherichia coli O157:H7).